The chain runs to 393 residues: MGYYSLTEVTAVQYAKEHGYFEKKANVVCHEIGDGNLNYVFKLDDGEKSIIIKQALPYAKVVGESWPLSIKRATIESKALQIFAKYVPEYVPVVYSHDEELAVTVIEDLSRLTITRKGLIDGEEYPLLSQHIGRFLANVLFYTSDFGLQSEEKRVLEGTFVNPDLCKITEDLVFTDPFGHYDTNDYEPELQLTIDELWSDKTLKLKVAQYKYKFLTRKEALIHGDLHTGSIFSSPSETKVIDPEFATYGPFGFDIGQFIANLLLNALSREEEQRGVLFFHIEKTWSYFVETFTKLWIGEGVEAYTKEKQWLPIILQNIFTDTVGFAGCELIRRTIGLAHVADLDEITNKETRIQAKKQALSLGKELIKYESKNADIQLFRTLFQQTVSGGIKA.

Residues N38, K53, and 107 to 109 (EDL) each bind ATP. D225 is a substrate binding site. 242-244 (DPE) contacts ATP. R332 serves as a coordination point for substrate.

This sequence belongs to the methylthioribose kinase family. In terms of assembly, homodimer.

The enzyme catalyses 5-(methylsulfanyl)-D-ribose + ATP = 5-(methylsulfanyl)-alpha-D-ribose 1-phosphate + ADP + H(+). It functions in the pathway amino-acid biosynthesis; L-methionine biosynthesis via salvage pathway; S-methyl-5-thio-alpha-D-ribose 1-phosphate from S-methyl-5'-thioadenosine (hydrolase route): step 2/2. Catalyzes the phosphorylation of methylthioribose into methylthioribose-1-phosphate. This is Methylthioribose kinase from Bacillus cereus (strain 03BB102).